A 136-amino-acid chain; its full sequence is uncharacterized protein (136 aa).

This is an uncharacterized protein from Bacillus subtilis (strain 168).